The sequence spans 303 residues: Ornithine carbamoyltransferase (303 aa).

Residues 52 to 55 (STRT), glutamine 79, arginine 103, and 130 to 133 (HPCQ) contribute to the carbamoyl phosphate site. Residues asparagine 161, aspartate 222, and 226–227 (SM) each bind L-ornithine. Carbamoyl phosphate contacts are provided by residues 262–263 (CL) and arginine 290.

It belongs to the aspartate/ornithine carbamoyltransferase superfamily. OTCase family.

It is found in the cytoplasm. The enzyme catalyses carbamoyl phosphate + L-ornithine = L-citrulline + phosphate + H(+). It functions in the pathway amino-acid biosynthesis; L-arginine biosynthesis; L-arginine from L-ornithine and carbamoyl phosphate: step 1/3. Functionally, reversibly catalyzes the transfer of the carbamoyl group from carbamoyl phosphate (CP) to the N(epsilon) atom of ornithine (ORN) to produce L-citrulline. The sequence is that of Ornithine carbamoyltransferase from Geobacter sulfurreducens (strain ATCC 51573 / DSM 12127 / PCA).